We begin with the raw amino-acid sequence, 288 residues long: UAP56-interacting factor (288 aa).

Residues 11-29 carry the UAP56-binding motif motif; sequence TIDKIDMSLDDIIKLNKQE. Residues 183–202 form a disordered region; sequence DLPELSKTPPWRTSVSSGGS.

This sequence belongs to the UIF family.

The protein localises to the nucleus. It is found in the nucleoplasm. It localises to the nucleus speckle. Functionally, required for mRNA export from the nucleus to the cytoplasm. Acts as an adapter that uses the ddx39b/uap56-nfx1 pathway to ensure efficient mRNA export and delivering to the nuclear pore. The protein is UAP56-interacting factor (fyttd1) of Xenopus laevis (African clawed frog).